The primary structure comprises 428 residues: Histone deacetylase 3 (428 aa).

The tract at residues 3–316 is histone deacetylase; sequence KTVAYFYDPD…WTYETSLLVD (314 aa). 1D-myo-inositol 1,4,5,6-tetrakisphosphate-binding residues include histidine 17, glycine 21, and lysine 25. Histidine 135 is a catalytic residue. Zn(2+) is bound by residues aspartate 170, histidine 172, and aspartate 259. Arginine 265 provides a ligand contact to 1D-myo-inositol 1,4,5,6-tetrakisphosphate. Composition is skewed to basic and acidic residues over residues 386–405 and 415–428; these read SYER…DNYS and DGDH…DVEI. Residues 386–428 are disordered; it reads SYERTDEPDPEERGSEDNYSRPEASNEFYDGDHDNDKESDVEI.

This sequence belongs to the histone deacetylase family. HD type 1 subfamily.

The protein resides in the nucleus. The protein localises to the chromosome. It localises to the cytoplasm. Its subcellular location is the cytosol. It catalyses the reaction N(6)-acetyl-L-lysyl-[histone] + H2O = L-lysyl-[histone] + acetate. It carries out the reaction N(6)-acetyl-L-lysyl-[protein] + H2O = L-lysyl-[protein] + acetate. The catalysed reaction is N(6)-(2E)-butenoyl-L-lysyl-[protein] + H2O = (2E)-2-butenoate + L-lysyl-[protein]. The enzyme catalyses N(6)-(2-hydroxyisobutanoyl)-L-lysyl-[protein] + H2O = 2-hydroxy-2-methylpropanoate + L-lysyl-[protein]. It catalyses the reaction N(6)-[(S)-lactoyl]-L-lysyl-[protein] + H2O = (S)-lactate + L-lysyl-[protein]. Its activity is regulated as follows. Inositol tetraphosphate (1D-myo-inositol 1,4,5,6-tetrakisphosphate) promotes the histone deacetylase activity by acting as an intermolecular glue between hdac3 and N-Cor repressor complex components. Functionally, histone deacetylase that catalyzes the deacetylation of lysine residues on the N-terminal part of the core histones (H2A, H2B, H3 and H4), and some other non-histone substrates. Histone deacetylation gives a tag for epigenetic repression and plays an important role in transcriptional regulation, cell cycle progression and developmental events. Histone deacetylases act via the formation of large multiprotein complexes, such as N-Cor repressor complex, which activate the histone deacetylase activity. Participates in the BCL6 transcriptional repressor activity by deacetylating the H3 'Lys-27' (H3K27) on enhancer elements, antagonizing EP300 acetyltransferase activity and repressing proximal gene expression. Also functions as a deacetylase for non-histone targets. In addition to protein deacetylase activity, also acts as a protein-lysine deacylase by recognizing other acyl groups: catalyzes removal of (2E)-butenoyl (crotonyl), lactoyl (lactyl) and 2-hydroxyisobutanoyl (2-hydroxyisobutyryl) acyl groups from lysine residues, leading to protein decrotonylation, delactylation and de-2-hydroxyisobutyrylation, respectively. This Xenopus tropicalis (Western clawed frog) protein is Histone deacetylase 3 (hdac3).